We begin with the raw amino-acid sequence, 450 residues long: Sulfide:quinone oxidoreductase, mitochondrial (450 aa).

Residues 53–54 (AG), Glu75, Gln83, and Val118 contribute to the FAD site. Lys134 and Lys173 each carry N6-acetyllysine. Cys201 (cysteine persulfide intermediate) is an active-site residue. A disulfide bond links Cys201 and Cys379. Asp336 provides a ligand contact to FAD. Ser343 carries the phosphoserine modification. FAD is bound at residue 344–347 (KTAA). Cys379 (cysteine persulfide intermediate) is an active-site residue.

It belongs to the SQRD family. The cofactor is FAD.

It localises to the mitochondrion. It catalyses the reaction ubiquinone-10 + hydrogen sulfide + sulfite + 2 H(+) = ubiquinol-10 + thiosulfate. It carries out the reaction a quinone + hydrogen sulfide + glutathione + H(+) = S-sulfanylglutathione + a quinol. The catalysed reaction is ubiquinone-10 + hydrogen sulfide + glutathione + H(+) = S-sulfanylglutathione + ubiquinol-10. Its function is as follows. Catalyzes the oxidation of hydrogen sulfide with the help of a quinone, such as ubiquinone-10, giving rise to thiosulfate and ultimately to sulfane (molecular sulfur) atoms. Requires an additional electron acceptor; can use sulfite, sulfide or cyanide (in vitro). It is believed the in vivo electron acceptor is glutathione. The sequence is that of Sulfide:quinone oxidoreductase, mitochondrial from Mus musculus (Mouse).